An 880-amino-acid polypeptide reads, in one-letter code: Alanine--tRNA ligase (880 aa).

The Zn(2+) site is built by histidine 566, histidine 570, cysteine 668, and histidine 672.

Belongs to the class-II aminoacyl-tRNA synthetase family. It depends on Zn(2+) as a cofactor.

The protein resides in the cytoplasm. It catalyses the reaction tRNA(Ala) + L-alanine + ATP = L-alanyl-tRNA(Ala) + AMP + diphosphate. Functionally, catalyzes the attachment of alanine to tRNA(Ala) in a two-step reaction: alanine is first activated by ATP to form Ala-AMP and then transferred to the acceptor end of tRNA(Ala). Also edits incorrectly charged Ser-tRNA(Ala) and Gly-tRNA(Ala) via its editing domain. This is Alanine--tRNA ligase from Alkaliphilus oremlandii (strain OhILAs) (Clostridium oremlandii (strain OhILAs)).